The chain runs to 91 residues: Small ribosomal subunit protein uS19 (91 aa).

This sequence belongs to the universal ribosomal protein uS19 family.

Protein S19 forms a complex with S13 that binds strongly to the 16S ribosomal RNA. This chain is Small ribosomal subunit protein uS19, found in Chromohalobacter salexigens (strain ATCC BAA-138 / DSM 3043 / CIP 106854 / NCIMB 13768 / 1H11).